A 100-amino-acid chain; its full sequence is Large ribosomal subunit protein bL21 (100 aa).

The protein belongs to the bacterial ribosomal protein bL21 family. As to quaternary structure, part of the 50S ribosomal subunit. Contacts protein L20.

In terms of biological role, this protein binds to 23S rRNA in the presence of protein L20. This chain is Large ribosomal subunit protein bL21, found in Wolbachia pipientis wMel.